The chain runs to 125 residues: Alpha-endosulfine (125 aa).

Over residues 1–37 (MSDKYIGDSHLEETGEEKQDSQEKEAVTPEKAEEQKL) the composition is skewed to basic and acidic residues. Residues 1 to 52 (MSDKYIGDSHLEETGEEKQDSQEKEAVTPEKAEEQKLKAKYPNLGQKPGGSD) form a disordered region. Position 28 is a phosphothreonine; by CDK2 (T28). Phosphoserine; by GWL is present on S67. A disordered region spans residues 86–107 (GPDKNLVTGDHIPTPQDLPQRK). T99 carries the phosphothreonine; by CDK2 modification. S109 bears the Phosphoserine; by PKA mark.

The protein belongs to the endosulfine family. Interacts (when phosphorylated at Ser-67) with ppp2r2d. Post-translationally, phosphorylation at Ser-67 by gwl during mitosis is essential for interaction with PPP2R2D (PR55-delta) and subsequent inactivation of PP2A. Phosphorylated by PKA.

The protein resides in the cytoplasm. Protein phosphatase inhibitor that specifically inhibits protein phosphatase 2A (PP2A) during mitosis. When phosphorylated at Ser-67 during mitosis, specifically interacts with ppp2r2d (PR55-delta) and inhibits its activity, leading to inactivation of PP2A, an essential condition to keep cyclin-B1-CDK1 activity high during M phase. In Xenopus laevis (African clawed frog), this protein is Alpha-endosulfine (ensa).